Reading from the N-terminus, the 118-residue chain is NADPH-dependent 7-cyano-7-deazaguanine reductase (118 aa).

The active-site Thioimide intermediate is the Cys31. Asp38 serves as the catalytic Proton donor. Residues Val53–Leu55 and Tyr72–Glu73 each bind substrate.

It belongs to the GTP cyclohydrolase I family. QueF type 1 subfamily.

The protein localises to the cytoplasm. It carries out the reaction 7-aminomethyl-7-carbaguanine + 2 NADP(+) = 7-cyano-7-deazaguanine + 2 NADPH + 3 H(+). The protein operates within tRNA modification; tRNA-queuosine biosynthesis. Catalyzes the NADPH-dependent reduction of 7-cyano-7-deazaguanine (preQ0) to 7-aminomethyl-7-deazaguanine (preQ1). This is NADPH-dependent 7-cyano-7-deazaguanine reductase from Chlorobium phaeobacteroides (strain BS1).